Consider the following 246-residue polypeptide: Osmotin-like protein TPM-1 (246 aa).

The first 21 residues, 1–21 (MAYLRSSFVFFLLAFVTYTYA), serve as a signal peptide directing secretion. 8 disulfide bridges follow: Cys-30-Cys-225, Cys-72-Cys-82, Cys-87-Cys-93, Cys-141-Cys-213, Cys-146-Cys-196, Cys-154-Cys-164, Cys-168-Cys-177, and Cys-178-Cys-183.

The protein belongs to the thaumatin family.

Its subcellular location is the vacuole. The enzyme catalyses Endohydrolysis of (1-&gt;3)- or (1-&gt;4)-linkages in beta-D-glucans when the glucose residue whose reducing group is involved in the linkage to be hydrolyzed is itself substituted at C-3.. In terms of biological role, antifungal protein that inhibits the growth of several phytopathogenic fungi (e.g. Trichothecium roseum, Fusarium oxysporum, Phytophthora citrophthora and Colletotrichum coccodes). May bind to beta-glucans and have beta-1,3-D-glucanase activity. This is Osmotin-like protein TPM-1 from Solanum lycopersicum (Tomato).